Here is a 544-residue protein sequence, read N- to C-terminus: Protein kinase dsk1 (544 aa).

Residues 81 to 516 (YVVERKLGWG…AGYMSNSPWL (436 aa)) enclose the Protein kinase domain. ATP is bound by residues 87–95 (LGWGHFSTV) and lysine 110. Aspartate 214 (proton acceptor) is an active-site residue. Disordered regions lie at residues 235–299 (PATT…SSPF) and 316–341 (ISLR…SLIL). The span at 237 to 254 (TTSSPTSNTSSSKTRNNT) shows a compositional bias: low complexity. 2 stretches are compositionally biased toward polar residues: residues 281-299 (KNPT…SSPF) and 327-337 (HPNSPFSSGDN).

Belongs to the protein kinase superfamily. Ser/Thr protein kinase family. In terms of processing, phosphorylated on Ser residue(s).

The protein localises to the cytoplasm. It localises to the nucleus. The catalysed reaction is L-seryl-[protein] + ATP = O-phospho-L-seryl-[protein] + ADP + H(+). It carries out the reaction L-threonyl-[protein] + ATP = O-phospho-L-threonyl-[protein] + ADP + H(+). May play an important role in mitotic control by altering cellular location, degree of phosphorylation and kinase activity. Abundant expression accelerates the exit when cells are in M-phase and also delays the entry into mitosis when cells are in G2. Phosphorylates prp2 in vitro and so may have a role in co-ordinating pre-mRNA splicing with the progression of the cell division cycle. In Schizosaccharomyces pombe (strain 972 / ATCC 24843) (Fission yeast), this protein is Protein kinase dsk1 (dsk1).